The chain runs to 309 residues: MEEFGISPGQLVAVFWDKSSPEEALKKLVARLQELTGSEGQVFMENVTQLLQSSHKESSFDVILSGVVPGSTSLHSAEVLAEMARILRPGGCLFLKEPVETAEVNNDKMKTASKLCSALTLSGLVEIKELQREALSPEEVQSVQEHLGYHSDSLRSVRVTGKKPNFEVGSSSQLKLPNKKSSSVKPVVDPAAAKLWTLSANDMEDDSVDLIDSDELLDPEDLKRPDPASLKAPSCGEGKKRKACKNCTCGLAEELEREQSKAQSSQPKSACGNCYLGDAFRCANCPYLGMPAFKPGEQVLLSNSNLQDA.

Residues 6 to 172 are N-terminal SAM-like domain; the sequence is ISPGQLVAVF…KPNFEVGSSS (167 aa). The linker stretch occupies residues 173–222; the sequence is QLKLPNKKSSSVKPVVDPAAAKLWTLSANDMEDDSVDLIDSDELLDPEDL. Ser-182, Ser-183, and Ser-213 each carry phosphoserine. Positions 235, 244, 247, and 249 each coordinate [2Fe-2S] cluster. A fe-S binding site A region spans residues 235-249; sequence CGEGKKRKACKNCTC. A Phosphoserine modification is found at Ser-269. Positions 271, 274, 282, and 285 each coordinate [4Fe-4S] cluster. 2 short sequence motifs (cx2C motif) span residues 271 to 274 and 282 to 285; these read CGNC and CANC. The tract at residues 271–285 is fe-S binding site B; the sequence is CGNCYLGDAFRCANC. 2 positions are modified to phosphoserine: Ser-302 and Ser-304.

It belongs to the anamorsin family. In terms of assembly, monomer. Interacts with NDOR1. Interacts with CHCHD4. The cofactor is [2Fe-2S] cluster. It depends on [4Fe-4S] cluster as a cofactor.

It localises to the cytoplasm. Its subcellular location is the nucleus. The protein localises to the mitochondrion intermembrane space. Functionally, component of the cytosolic iron-sulfur (Fe-S) protein assembly (CIA) machinery required for the maturation of extramitochondrial Fe-S proteins. Part of an electron transfer chain functioning in an early step of cytosolic Fe-S biogenesis, facilitating the de novo assembly of a [4Fe-4S] cluster on the scaffold complex NUBP1-NUBP2. Electrons are transferred to CIAPIN1 from NADPH via the FAD- and FMN-containing protein NDOR1. NDOR1-CIAPIN1 are also required for the assembly of the diferric tyrosyl radical cofactor of ribonucleotide reductase (RNR), probably by providing electrons for reduction during radical cofactor maturation in the catalytic small subunit. Has anti-apoptotic effects in the cell. Involved in negative control of cell death upon cytokine withdrawal. Promotes development of hematopoietic cells. This chain is Anamorsin, found in Mus musculus (Mouse).